Reading from the N-terminus, the 420-residue chain is FAD-dependent monooxygenase ntnJ (420 aa).

A helical membrane pass occupies residues 12-31 (FRVIVVGAGIGGLSAAVALA). Glu41 and Ala54 together coordinate FAD. N-linked (GlcNAc...) asparagine glycosylation is present at Asn124. Residue Arg187 is part of the active site. An N-linked (GlcNAc...) asparagine glycan is attached at Asn264. FAD is bound by residues Asp302 and Val315.

It belongs to the paxM FAD-dependent monooxygenase family. FAD serves as cofactor.

It is found in the membrane. It functions in the pathway secondary metabolite biosynthesis; terpenoid biosynthesis. Its function is as follows. FAD-dependent monooxygenase; part of the gene cluster that mediates the biosynthesis of the meroterpenoids nectripenoids A and B, as well as cochliquninone D and isocochliquninone E. The pathway probably begins with the HR-PKS ntnH that catalyzes two chain-extension steps to form a reduced triketide, which then primes the SAT domain in the NR-PKS ntnG to initiate three more cycles of extension to give a linear hexaketide corresponding to the polyketide part of nectripenoids. The FAD-dependent monooxygenase ntnJ then performs an oxidative decarboxylation at C11 of the ntnH/ntnG product, via an electrophilic aromatic hydroxylation with concomitant ipso-decarboxylation. The membrane-bound polyprenyl transferase ntnF then introduces a farnesyl group before the FAD-dependent monooxygenase ntnK functions as the first epoxidase on terminal C12'-C13' olefin, followed by a second epoxidation on C7'-C8' catalyzed by ntnA. The terpene cyclase/mutase ntnI then initiates the sequential tricyclic ring formation through protonation of the terminal epoxide and catalyzes the regioselective and stereoselective 6/6/6-tricyclic ring formation. The cytochrome P450 monooxygenase ntnM may then hydroxylate C1'. The chain is FAD-dependent monooxygenase ntnJ from Nectria sp.